The primary structure comprises 379 residues: PqqA peptide cyclase (379 aa).

One can recognise a Radical SAM core domain in the interval 8 to 220; it reads LPAPIGLLAE…IRVVEEARER (213 aa). [4Fe-4S] cluster contacts are provided by C22, C26, and C29.

It belongs to the radical SAM superfamily. PqqE family. As to quaternary structure, interacts with PqqD. The interaction is necessary for activity of PqqE. [4Fe-4S] cluster serves as cofactor.

The catalysed reaction is [PQQ precursor protein] + S-adenosyl-L-methionine = E-Y cross-linked-[PQQ precursor protein] + 5'-deoxyadenosine + L-methionine + H(+). It participates in cofactor biosynthesis; pyrroloquinoline quinone biosynthesis. Functionally, catalyzes the cross-linking of a glutamate residue and a tyrosine residue in the PqqA protein as part of the biosynthesis of pyrroloquinoline quinone (PQQ). This is PqqA peptide cyclase from Methylobacterium sp. (strain 4-46).